The chain runs to 105 residues: MYRLAMRTWLAIVIVVVGTSLLFDTASASFIDNTCRGVMGNRDIYKKVVRVCEDCTNIFRLPGLDGMCRNRCFYNEWFLICLKAANREDEIEKFRVWISILNAGQ.

Residues M1 to A28 form the signal peptide. Intrachain disulfides connect C35–C72, C52–C68, and C55–C81.

This sequence belongs to the arthropod CHH/MIH/GIH/VIH hormone family. As to expression, produced by the medulla terminalis X-organ in the eyestalks and transported to the sinus gland where it is stored and released.

The protein localises to the secreted. Inhibits Y-organs where molting hormone (ecdysteroid) is secreted. A molting cycle is initiated when MIH secretion diminishes or stops. Has little or no hyperglycemic activity. The protein is Molt-inhibiting hormone of Penaeus japonicus (Kuruma prawn).